A 433-amino-acid chain; its full sequence is 3-phosphoshikimate 1-carboxyvinyltransferase (433 aa).

Positions 23, 24, and 28 each coordinate 3-phosphoshikimate. Residue Lys-23 coordinates phosphoenolpyruvate. Residues Gly-95 and Arg-123 each contribute to the phosphoenolpyruvate site. 3-phosphoshikimate contacts are provided by Ser-167, Gln-169, Asp-317, and Lys-344. Phosphoenolpyruvate is bound at residue Gln-169. The Proton acceptor role is filled by Asp-317. Phosphoenolpyruvate-binding residues include Arg-348 and Arg-390.

The protein belongs to the EPSP synthase family. In terms of assembly, monomer.

It is found in the cytoplasm. It carries out the reaction 3-phosphoshikimate + phosphoenolpyruvate = 5-O-(1-carboxyvinyl)-3-phosphoshikimate + phosphate. It functions in the pathway metabolic intermediate biosynthesis; chorismate biosynthesis; chorismate from D-erythrose 4-phosphate and phosphoenolpyruvate: step 6/7. Functionally, catalyzes the transfer of the enolpyruvyl moiety of phosphoenolpyruvate (PEP) to the 5-hydroxyl of shikimate-3-phosphate (S3P) to produce enolpyruvyl shikimate-3-phosphate and inorganic phosphate. The polypeptide is 3-phosphoshikimate 1-carboxyvinyltransferase (Staphylococcus epidermidis (strain ATCC 12228 / FDA PCI 1200)).